Consider the following 141-residue polypeptide: Hemoglobin subunit alpha-D (141 aa).

The Globin domain occupies 1–141 (MLSADDKKII…VAAVLAEKYR (141 aa)). Positions 58 and 87 each coordinate heme b.

This sequence belongs to the globin family. In terms of assembly, heterotetramer of two alpha-D chains and two beta chains. In terms of tissue distribution, red blood cells.

Functionally, involved in oxygen transport from the lung to the various peripheral tissues. The sequence is that of Hemoglobin subunit alpha-D (HBAD) from Anser indicus (Bar-headed goose).